The primary structure comprises 328 residues: MAKTSIKLNSGYEMPLVGFGIWKVPVDKTAQAVYDAIKLGYRQIDGAYDYTNSKEAGEGVRRAIEEGIVKREDLFITSKLWNNYHKHEHAIEMAKHEVDTWGIGYLDLFLIHFPISLEYISHSKMPYPCFWPDREKSRSTPLQYTPVAETWAALESLVKTDSNPDGILRSIGVANFRAQLLTDLWGSAKIKPAVNQIEHHPYLVQPQLLAFLKDHGIAITAYSSFGPQSFVELDHPRVSKVEPLFTHPTIKAIADKHGRTGAQVLLRWATQRDIVVIPKSNNVDRLKQNLDCVSFDLSDDEVKQISDLDCGVRFNDPADLSPPIYIFD.

Tyr-50 (proton donor) is an active-site residue. Residue His-112 participates in substrate binding. NAD(+)-binding positions include 174–175 (AN), 223–232 (SSFGPQSFVE), and 279–289 (KSNNVDRLKQN).

This sequence belongs to the aldo/keto reductase family.

Functionally, pentose reductase with a broad substrate affinity involved in pentose catabolism. Has highest reductase activities with L-arabinose and D-xylose as substrates, and displays much lower activities with D-ribose, D-galactose and D-glucose. Has highest dehydrogenase activity with L-arabitol as substrate, followed by xylitol and D-sorbitol. May be responsible for the first step of the L-arabinose catabolic pathway. The protein is NAD(P)H-dependent pentose reductase (PRD1) of Pyricularia oryzae (strain 70-15 / ATCC MYA-4617 / FGSC 8958) (Rice blast fungus).